The following is a 151-amino-acid chain: 18 kDa heat shock protein (151 aa).

In terms of domain architecture, sHSP spans 38-151; the sequence is TFNGNAGFKV…KDNGRRIDIH (114 aa).

The protein belongs to the small heat shock protein (HSP20) family.

Probable chaperone. The polypeptide is 18 kDa heat shock protein (hsp18) (Clostridium acetobutylicum (strain ATCC 824 / DSM 792 / JCM 1419 / IAM 19013 / LMG 5710 / NBRC 13948 / NRRL B-527 / VKM B-1787 / 2291 / W)).